The following is a 93-amino-acid chain: Small ribosomal subunit protein uS19 (93 aa).

It belongs to the universal ribosomal protein uS19 family.

Functionally, protein S19 forms a complex with S13 that binds strongly to the 16S ribosomal RNA. This Ehrlichia ruminantium (strain Welgevonden) protein is Small ribosomal subunit protein uS19.